Here is a 324-residue protein sequence, read N- to C-terminus: Testisin (324 aa).

The signal sequence occupies residues 1–21 (MGARGKTLVPLLVVVATAAMA). Residues 22–54 (LQSTYLQVDPEKPELQEPDLLSGPCGHRTIPSR) constitute a propeptide that is removed on maturation. Disulfide bonds link cysteine 46–cysteine 167 and cysteine 80–cysteine 96. The 242-residue stretch at 55–296 (IVGGDDAELG…HYNWIQSTMI (242 aa)) folds into the Peptidase S1 domain. Catalysis depends on charge relay system residues histidine 95 and aspartate 147. Residues asparagine 170, asparagine 177, and asparagine 210 are each glycosylated (N-linked (GlcNAc...) asparagine). Cystine bridges form between cysteine 181-cysteine 254, cysteine 214-cysteine 233, and cysteine 244-cysteine 272. Serine 248 (charge relay system) is an active-site residue. Residue asparagine 283 is glycosylated (N-linked (GlcNAc...) asparagine). Asparagine 298 is lipidated: GPI-anchor amidated asparagine. A propeptide spans 299–324 (GLLRPDPVPLLLFLTLAWASSLLRPA) (removed in mature form).

It belongs to the peptidase S1 family. In terms of tissue distribution, testis.

It localises to the cell membrane. Functionally, could regulate proteolytic events associated with testicular germ cell maturation. In Mus musculus (Mouse), this protein is Testisin (Prss21).